We begin with the raw amino-acid sequence, 449 residues long: MLSSQTSSIFTVSRLNQTVRLLLEQEMGQVWISGEISNFTQPASGHWYFTLKDDTAQVRCAMFRNSNRRVTFRPQHGQQVLVRANITLYEPRGDYQIIAESMQPAGEGLLQQKYEQLKAKLHSEGLFDQQHKQPLPSPAHCVGVITSKTGAALHDILHVLKRRDPSLPVIIYPTAVQGDDAPGQIVRAIELANARGECDVLIVGRGGGSLEDLWSFNDERVARAIFASRIPVVSAVGHETDVTIADFVADLRAPTPSAAAEIVSRNQQELLRRIQSAQQRLGMAMDYYLANRSRRFTQIFHRLQQQHPQLRLARQQTALERLRQRMGFALEARIKQATQRQQRVSQRLSQQNPQPRIHRAQSRIQQLEYRLTENIRSRLSEQRERFGNAVTHLEAVSPLATLARGYTVSTTTNGKVLKKIKQVKAGDIMTTRLEDGWLESEVKSVTPGT.

The protein belongs to the XseA family. In terms of assembly, heterooligomer composed of large and small subunits.

It is found in the cytoplasm. It carries out the reaction Exonucleolytic cleavage in either 5'- to 3'- or 3'- to 5'-direction to yield nucleoside 5'-phosphates.. Bidirectionally degrades single-stranded DNA into large acid-insoluble oligonucleotides, which are then degraded further into small acid-soluble oligonucleotides. This chain is Exodeoxyribonuclease 7 large subunit, found in Salmonella agona (strain SL483).